A 316-amino-acid polypeptide reads, in one-letter code: Protoheme IX farnesyltransferase (316 aa).

The next 9 helical transmembrane spans lie at 28–48, 57–77, 106–126, 129–149, 156–176, 179–199, 230–250, 254–274, and 296–316; these read WLAL…AAGM, IPIG…AGAI, AALV…WLAT, LAAD…TMWL, NIVI…AATM, MAVL…PHFW, ILIY…VHEV, YTVV…RVLM, and YSLV…VLIG.

Belongs to the UbiA prenyltransferase family. Protoheme IX farnesyltransferase subfamily.

It localises to the cell inner membrane. It carries out the reaction heme b + (2E,6E)-farnesyl diphosphate + H2O = Fe(II)-heme o + diphosphate. It functions in the pathway porphyrin-containing compound metabolism; heme O biosynthesis; heme O from protoheme: step 1/1. Functionally, converts heme B (protoheme IX) to heme O by substitution of the vinyl group on carbon 2 of heme B porphyrin ring with a hydroxyethyl farnesyl side group. In Gluconobacter oxydans (strain 621H) (Gluconobacter suboxydans), this protein is Protoheme IX farnesyltransferase.